The following is a 151-amino-acid chain: UPAR/Ly6 domain-containing protein rtv (151 aa).

Residues Met-1 to Ile-19 form the signal peptide. Topologically, residues Asp-20–Ser-125 are extracellular. Cystine bridges form between Cys-26–Cys-65, Cys-29–Cys-38, Cys-60–Cys-88, Cys-100–Cys-113, and Cys-115–Cys-120. Asn-45 carries an N-linked (GlcNAc...) asparagine glycan. Asn-121 is lipidated: GPI-anchor amidated asparagine. A propeptide spans Gly-122–Asn-151 (removed in mature form). A helical transmembrane segment spans residues Trp-126–Leu-146. At Gln-147–Asn-151 the chain is on the cytoplasmic side.

It belongs to the quiver family.

Its subcellular location is the cell membrane. Functionally, required for chitin fiber assembly and organization involved in cuticle formation and tracheal development. This chain is UPAR/Ly6 domain-containing protein rtv, found in Drosophila melanogaster (Fruit fly).